A 312-amino-acid polypeptide reads, in one-letter code: Glyoxylate/hydroxypyruvate reductase A (312 aa).

Residue R227 is part of the active site. The active-site Proton donor is H275.

It belongs to the D-isomer specific 2-hydroxyacid dehydrogenase family. GhrA subfamily.

The protein resides in the cytoplasm. It catalyses the reaction glycolate + NADP(+) = glyoxylate + NADPH + H(+). The enzyme catalyses (R)-glycerate + NAD(+) = 3-hydroxypyruvate + NADH + H(+). It carries out the reaction (R)-glycerate + NADP(+) = 3-hydroxypyruvate + NADPH + H(+). Its function is as follows. Catalyzes the NADPH-dependent reduction of glyoxylate and hydroxypyruvate into glycolate and glycerate, respectively. The polypeptide is Glyoxylate/hydroxypyruvate reductase A (Salmonella agona (strain SL483)).